The following is an 841-amino-acid chain: Taste receptor type 1 member 1 (841 aa).

The N-terminal stretch at 1-20 (MLLCTARLVGLQLLISCCWA) is a signal peptide. Residues 21–567 (FACHSTESSP…VFLALREHTS (547 aa)) lie on the Extracellular side of the membrane. N-linked (GlcNAc...) asparagine glycosylation is found at Asn87, Asn88, Asn95, Asn291, Asn479, and Asn529. The helical transmembrane segment at 568–588 (WVLLAANTLLLLLLLGTAGLF) threads the bilayer. The Cytoplasmic segment spans residues 589 to 603 (AWHLDTPVVRSAGGR). Residues 604 to 624 (LCFLMLGSLAAGSGSLYGFFG) traverse the membrane as a helical segment. Residues 625-639 (EPTRPACLLRQALFA) are Extracellular-facing. The chain crosses the membrane as a helical span at residues 640 to 660 (LGFTIFLSCLTVRSFQLIIIF). Residues 661–680 (KFSTKVPTFYHAWVQNHGAG) are Cytoplasmic-facing. A helical transmembrane segment spans residues 681–701 (LFVMISSAAQLLICLTWLVVW). Over 702–725 (TPLPAREYQRFPHLVMLECTETNS) the chain is Extracellular. A helical transmembrane segment spans residues 726 to 746 (LGFILAFLYNGLLSISAFACS). The Cytoplasmic portion of the chain corresponds to 747–761 (YLGKDLPENYNEAKC). The chain crosses the membrane as a helical span at residues 762–782 (VTFSLLFNFVSWIAFFTTASV). The Extracellular portion of the chain corresponds to 783–795 (YDGKYLPAANMMA). Residues 796–816 (GLSSLSSGFGGYFLPKCYVIL) traverse the membrane as a helical segment. The Cytoplasmic portion of the chain corresponds to 817 to 841 (CRPDLNSTEHFQASIQDYTRRCGST).

Belongs to the G-protein coupled receptor 3 family. TAS1R subfamily. In terms of assembly, forms heterodimers with TAS1R3.

Its subcellular location is the cell membrane. Putative taste receptor. TAS1R1/TAS1R3 responds to the umami taste stimulus (the taste of monosodium glutamate). Sequence differences within and between species can significantly influence the selectivity and specificity of taste responses. This Homo sapiens (Human) protein is Taste receptor type 1 member 1 (TAS1R1).